The sequence spans 185 residues: Inner membrane-spanning protein YciB (185 aa).

The next 5 membrane-spanning stretches (helical) occupy residues 19 to 39 (IHGI…LMAW), 49 to 69 (TMTW…LYFH), 72 to 92 (TFIK…LLFT), 122 to 142 (GYWI…AYAF), and 150 to 170 (FKLF…AVVI).

The protein belongs to the YciB family.

It is found in the cell inner membrane. Its function is as follows. Plays a role in cell envelope biogenesis, maintenance of cell envelope integrity and membrane homeostasis. This is Inner membrane-spanning protein YciB from Acidithiobacillus ferrooxidans (strain ATCC 23270 / DSM 14882 / CIP 104768 / NCIMB 8455) (Ferrobacillus ferrooxidans (strain ATCC 23270)).